Here is a 236-residue protein sequence, read N- to C-terminus: MSILIENISKRFGSFQALDRVNLEIKNGSLVGLLGPSGSGKSTLLRVLAGLEKPDSGRIWLEGQDATQMKLQDREIGFVFQNYALFPHLTVSENVAFGLEIQKIDSLLKKKRVNELLKLMQLEKFGDSYPNQLSGGQRQRVALARALAMEPKVLLLDEPFAALDAKIRKQLRSWLRELHHKISVTTVFVTHDYSEAMELAQEIVLLENGKIIQIGSAQELSDHPTNTFVTNFLGLK.

The ABC transporter domain occupies Ile-3–Leu-233. Gly-35–Ser-42 lines the ATP pocket.

It belongs to the ABC transporter superfamily. Sulfate/tungstate importer (TC 3.A.1.6) family.

It localises to the plastid. The protein localises to the chloroplast. It catalyses the reaction sulfate(out) + ATP + H2O = sulfate(in) + ADP + phosphate + H(+). The enzyme catalyses thiosulfate(out) + ATP + H2O = thiosulfate(in) + ADP + phosphate + H(+). In terms of biological role, part of the ABC transporter complex involved in sulfate/thiosulfate import. Responsible for energy coupling to the transport system. The protein is Probable sulfate/thiosulfate import ATP-binding protein CysA of Chlorella vulgaris (Green alga).